Reading from the N-terminus, the 827-residue chain is MEESSVTVGTIDVSYLPSSSEYSLGRCKHTSEDWVDCGFKPTFFRSATLKWKESLMSRKRPFVGRCCYSCTPQSWERFFNPSIPSLGLRNVIYINETHTRHRGWLARRLSYILFVQERDVHKGMFATSVTENVLSSSRVQEAIAEVAAELNPDGSAQQQSKAIQKVKRKARKILQEMVATVSPGMIRLTGWVLLKLFNSFFWNIQIHKGQLEMVKAATETNLPLLFLPVHRSHIDYLLLTFILFCHNIKAPYIASGNNLNIPVFSTLIHKLGGFFIRRRLDETPDGRKDILYRALLHGHVVELLRQQQFLEIFLEGTRSRSGKTSCARAGLLSVVVDTLSSNTIPDILVIPVGISYDRIIEGHYNGEQLGKPKKNESLWSVARGVIRMLRKNYGYVRVDFAQPFSLKEYLEGQSQKPVSAPLSLEQALLPAILPSRPNDVADEHQDLSSNESRNPADEAFRRRLIANLAEHILFTASKSCAIMSTHIVACLLLYRHRQGIHLSTLVEDFFVMKEEVLARDFDLGFSGNSEDVVMHAIQLLGNCVTITHTSRKDEFFITPSTTVPSVFELNFYSNGVLHVFIMEAIIACSIYAVLNKRCSGGSAGGLGNLISQEQLVRKAASLCYLLSNEGTISLPCQTFYQVCHETVGKFIQYGILTVAEQDDQEDVSPGLAEQQWDKKLPELNWRSDEEDEDSDFGEEQRDCYLKVSQSKEHQQFITFLQRLLGPLLEAYSSAAIFVHNFSGPVPESEYLQKLHRYLITRTERNVAVYAESATYCLVKNAVKMFKDIGVFKETKQKRVSVLELSSTFLPQCNRQKLLEYILSFVVL.

Over 1–87 (MEESSVTVGT…FFNPSIPSLG (87 aa)) the chain is Cytoplasmic. An important for mitochondrial localization region spans residues 80-120 (NPSIPSLGLRNVIYINETHTRHRGWLARRLSYILFVQERDV). An intramembrane segment occupies 88-118 (LRNVIYINETHTRHRGWLARRLSYILFVQER). At 119 to 827 (DVHKGMFATS…LEYILSFVVL (709 aa)) the chain is on the cytoplasmic side. An HXXXXD motif motif is present at residues 230 to 235 (HRSHID). The CoA site is built by Arg278, Arg279, Lys288, Arg293, and Arg328. Ser380 bears the Phosphoserine mark. Arg462 contacts CoA. Residues Ser687 and Ser694 each carry the phosphoserine modification. An N6-acetyllysine mark is found at Lys779 and Lys783.

Belongs to the GPAT/DAPAT family. In terms of tissue distribution, highest levels in liver, intermediate levels in muscle and kidney, and lowest levels in lung and brain.

The protein resides in the mitochondrion outer membrane. It carries out the reaction sn-glycerol 3-phosphate + an acyl-CoA = a 1-acyl-sn-glycero-3-phosphate + CoA. It catalyses the reaction (9Z,12Z)-octadecadienoyl-CoA + sn-glycerol 3-phosphate = 1-(9Z,12Z)-octadecadienoyl-sn-glycero-3-phosphate + CoA. The catalysed reaction is sn-glycerol 3-phosphate + (9Z)-octadecenoyl-CoA = 1-(9Z-octadecenoyl)-sn-glycero-3-phosphate + CoA. The enzyme catalyses sn-glycerol 3-phosphate + octadecanoyl-CoA = 1-octadecanoyl-sn-glycero-3-phosphate + CoA. It carries out the reaction sn-glycerol 3-phosphate + hexadecanoyl-CoA = 1-hexadecanoyl-sn-glycero-3-phosphate + CoA. It catalyses the reaction dodecanoyl-CoA + sn-glycerol 3-phosphate = 1-dodecanoyl-sn-glycerol 3-phosphate + CoA. The catalysed reaction is 1-acyl-sn-glycero-3-phospho-(1'-sn-glycerol) + an acyl-CoA = a 1,2-diacyl-sn-glycero-3-phospho-(1'-sn-glycerol) + CoA. It participates in phospholipid metabolism; CDP-diacylglycerol biosynthesis; CDP-diacylglycerol from sn-glycerol 3-phosphate: step 1/3. In terms of biological role, mitochondrial membrane protein that catalyzes the essential first step of biosynthesis of glycerolipids such as triglycerides, phosphatidic acids and lysophosphatidic acids. Esterifies acyl-group from acyl-coenzyme A (acyl-CoA) to the sn-1 position of glycerol-3-phosphate, to produce lysophosphatidic acid. Has a narrow hydrophobic binding cleft that selects for a linear acyl chain. Catalytic activity is higher for substrates with a 16-carbon acyl chain. The sequence is that of Glycerol-3-phosphate acyltransferase 1, mitochondrial from Mus musculus (Mouse).